Here is a 390-residue protein sequence, read N- to C-terminus: uncharacterized protein (390 aa).

The next 11 membrane-spanning stretches (helical) occupy residues 10–30 (LSFCVIFLLRMLGMFMILPIL), 43–63 (FLIGLSMGIYGISQVIFQIPF), 81–101 (FMFFIGNIISASIHSIWGLII), 134–154 (AIGVSFAISFLIAVVSGPIIV), 162–182 (IFWISAFLSIVCMIIVCFFVP), 213–233 (FYLGVFFLHFLLMIKFTMIPN), 246–266 (WKVYLGTILISFFVLFLFIFY), 272–292 (ILENIIEICILFILFSEIIFL), 298–318 (LLFLIISLQIFFISFNFLEVF), 341–361 (TSQFLGIFFGGVFSGWLYSFL), and 363–383 (FSQIFYFELFIILLWLIFSFF).

This sequence belongs to the major facilitator superfamily.

The protein resides in the cell membrane. This is an uncharacterized protein from Buchnera aphidicola subsp. Acyrthosiphon pisum (strain APS) (Acyrthosiphon pisum symbiotic bacterium).